The sequence spans 236 residues: 2-C-methyl-D-erythritol 4-phosphate cytidylyltransferase (236 aa).

It belongs to the IspD/TarI cytidylyltransferase family. IspD subfamily. In terms of assembly, homodimer.

It catalyses the reaction 2-C-methyl-D-erythritol 4-phosphate + CTP + H(+) = 4-CDP-2-C-methyl-D-erythritol + diphosphate. The protein operates within isoprenoid biosynthesis; isopentenyl diphosphate biosynthesis via DXP pathway; isopentenyl diphosphate from 1-deoxy-D-xylulose 5-phosphate: step 2/6. Functionally, catalyzes the formation of 4-diphosphocytidyl-2-C-methyl-D-erythritol from CTP and 2-C-methyl-D-erythritol 4-phosphate (MEP). The protein is 2-C-methyl-D-erythritol 4-phosphate cytidylyltransferase of Salmonella paratyphi B (strain ATCC BAA-1250 / SPB7).